We begin with the raw amino-acid sequence, 254 residues long: Switch-activating protein 1 (254 aa).

The span at 1-10 (MEAPKMELKS) shows a compositional bias: basic and acidic residues. The segment at 1-30 (MEAPKMELKSYKRKNASLSPSSSPAKAQRT) is disordered. The span at 16–25 (ASLSPSSSPA) shows a compositional bias: low complexity. Phosphoserine occurs at positions 17 and 19. Repeat copies occupy residues 221–224 (GVNM), 225–228 (GTNM), 229–232 (GANM), and 233–236 (GANM). Positions 221–236 (GVNMGTNMGANMGANM) are 4 X 4 AA tandem repeats of G-[ATV]-N-M.

Homodimer.

The protein localises to the nucleus. In terms of biological role, binds to sequences required for mating-type switching. Makes a simultaneous contact with both the alpha and beta domains of the switch-activating site SAS1. Also binds to replication fork barrier 1 (RFB1) located within a 78 base pair sequence near the 3' end of the rRNA coding region. This leads to replication fork blockage. It binds the consensus sequence 5'-TA[AG]GCAGNTN[CT]AACG[AC]G-3'. Its function is as follows. Has a role in chromosome organization and integrity where it is involved in chromosome segregation. Has a role in sister chromatid cohesion and condensation. The sequence is that of Switch-activating protein 1 (sap1) from Schizosaccharomyces pombe (strain 972 / ATCC 24843) (Fission yeast).